Here is a 260-residue protein sequence, read N- to C-terminus: Alpha- and beta-fibrinogenase OhS1 (260 aa).

The signal sequence occupies residues 1–18; sequence MALIRVLASLLILQLSYA. The propeptide occupies 19 to 24; the sequence is VTPFDR. The Peptidase S1 domain occupies 25 to 248; sequence IIGGFECNEY…YIDWIEGIIA (224 aa). 6 disulfide bridges follow: Cys-31-Cys-163, Cys-50-Cys-66, Cys-98-Cys-255, Cys-142-Cys-209, Cys-174-Cys-188, and Cys-199-Cys-224. Asn-44 carries N-linked (GlcNAc...) asparagine glycosylation. His-65 functions as the Charge relay system in the catalytic mechanism. N-linked (GlcNAc...) asparagine glycosylation is present at Asn-79. Asp-110 serves as the catalytic Charge relay system. 2 N-linked (GlcNAc...) asparagine glycosylation sites follow: Asn-117 and Asn-121. Ser-203 functions as the Charge relay system in the catalytic mechanism. An N-linked (GlcNAc...) asparagine glycan is attached at Asn-250.

This sequence belongs to the peptidase S1 family. Snake venom subfamily. As to quaternary structure, monomer. In terms of tissue distribution, expressed by the venom gland.

Its subcellular location is the secreted. With respect to regulation, completely inhibited by NPGB, PMSF, diisopropylfluorophosphate (DFP), benzamidine and soybean trypsin inhibitor. Not inhibited by EDTA. Its function is as follows. Snake venom serine protease that possesses potent fibrinogenolytic (on both alpha- (FGA) and beta-chains (FGB)) and amidolytic activities. Selectively cleaves Arg-|-Xaa or Lys-|-Xaa bonds. The protein is Alpha- and beta-fibrinogenase OhS1 of Ophiophagus hannah (King cobra).